The following is a 206-amino-acid chain: Glutathione S-transferase 1 (206 aa).

Residues P2–G79 form the GST N-terminal domain. Residues Y8, W39, K43, G49–L51, and Q63–S64 contribute to the glutathione site. Positions T81–Y206 constitute a GST C-terminal domain.

The protein belongs to the GST superfamily. Sigma family.

The catalysed reaction is RX + glutathione = an S-substituted glutathione + a halide anion + H(+). Functionally, conjugation of reduced glutathione to a wide number of exogenous and endogenous hydrophobic electrophiles. Can also function as a GSH peroxidase. This chain is Glutathione S-transferase 1 (GST1), found in Ascaris suum (Pig roundworm).